The primary structure comprises 615 residues: Filament-like plant protein 3 (615 aa).

Basic and acidic residues predominate over residues 1 to 18; that stretch reads MDRRSWLWRRKSSEKSPG. The tract at residues 1-55 is disordered; that stretch reads MDRRSWLWRRKSSEKSPGETESTGSVSSHSERFSDDQRSQSPELNSKPVTREEEA. Over residues 19–28 the composition is skewed to polar residues; it reads ETESTGSVSS. Positions 29 to 38 are enriched in basic and acidic residues; the sequence is HSERFSDDQR. A compositionally biased stretch (polar residues) spans 39–48; that stretch reads SQSPELNSKP. Coiled-coil stretches lie at residues 87–121 and 148–211; these read AEEA…LEDR and EEAI…KSEE. 2 disordered regions span residues 258–289 and 319–343; these read DNSS…SPSE and PHSE…HVNQ. The span at 262–288 shows a compositional bias: polar residues; the sequence is DLKSSIDNQSDYSGRVSFSDNEMQSPS. Positions 322–343 are enriched in basic and acidic residues; sequence EPGRKHSESNKELEKSNAHVNQ. A coiled-coil region spans residues 327-563; sequence HSESNKELEK…KQELEHHQET (237 aa).

Belongs to the FPP family. As to quaternary structure, interacts with WPP/MAF proteins. Binds to COG2; this interaction promotes the association between cortical microtubules and EXO70A1. Accumulates in preferentially xylem cells.

The protein resides in the vesicle. Functionally, ensures, when in complex with COG2 and FPP2/VETH2, the correct secondary cell wall (SCW) deposition pattern by recruiting exocyst components to cortical microtubules in xylem cells during secondary cell wall deposition by recruiting EXO70A1. The polypeptide is Filament-like plant protein 3 (Arabidopsis thaliana (Mouse-ear cress)).